The sequence spans 441 residues: Glutamyl-tRNA reductase (441 aa).

Substrate-binding positions include 49–52 (TCNR), S109, 114–116 (EGQ), and Q120. C50 acts as the Nucleophile in catalysis. 198 to 203 (GAGRMS) contributes to the NADP(+) binding site.

It belongs to the glutamyl-tRNA reductase family. In terms of assembly, homodimer.

The enzyme catalyses (S)-4-amino-5-oxopentanoate + tRNA(Glu) + NADP(+) = L-glutamyl-tRNA(Glu) + NADPH + H(+). Its pathway is porphyrin-containing compound metabolism; protoporphyrin-IX biosynthesis; 5-aminolevulinate from L-glutamyl-tRNA(Glu): step 1/2. It functions in the pathway porphyrin-containing compound metabolism; chlorophyll biosynthesis. In terms of biological role, catalyzes the NADPH-dependent reduction of glutamyl-tRNA(Glu) to glutamate 1-semialdehyde (GSA). The chain is Glutamyl-tRNA reductase from Prochlorococcus marinus (strain NATL1A).